Reading from the N-terminus, the 264-residue chain is DNA repair protein RecO (264 aa).

Belongs to the RecO family.

Functionally, involved in DNA repair and RecF pathway recombination. The protein is DNA repair protein RecO of Prosthecochloris aestuarii (strain DSM 271 / SK 413).